An 807-amino-acid chain; its full sequence is MMDSPFLELWQSKAVSIREQLGLGDRPNDSYCYNSAKNSTVLQGVTFGGIPTVLLIDVSCFLFLILVFSIIRRRFWDYGRIALVSEADSESRFQRLSSTSSSGQQDFENELGCCPWLTAIFRLHDDQILEWCGEDAIHYLSFQRHIIFLLVVVSFLSLCVILPVNLSGDLLDKDPYSFGRTTIANLQTDNDLLWLHTIFAVIYLFLTVGFMRHHTQSIKYKEENLVRRTLFITGLPRDARKETVESHFRDAYPTCEVVDVQLCYNVAKLIYLCKEKKKTEKSLTYYTNLQVKTGQRTLINPKPCGQFCCCEVLGCEWEDAISYYTRMKDRLLERITEEERHVQDQPLGMAFVTFQEKSMATYILKDFNACKCQSLQCKGEPQPSSHSRELYTSKWTVTFAADPEDICWKNLSIQGLRWWLQWLGINFTLFLGLFFLTTPSIILSTMDKFNVTKPIHALNNPIISQFFPTLLLWSFSALLPSIVYYSTLLESHWTKSGENQIMMTKVYIFLIFMVLILPSLGLTSLDFFFRWLFDKTSSEASIRLECVFLPDQGAFFVNYVIASAFIGNGMELLRLPGLILYTFRMIMAKTAADRRNVKQNQAFQYEFGAMYAWMLCVFTVIVAYSITCPIIAPFGLIYILLKHMVDRHNLYFVYLPAKLEKGIHFAAVNQALAAPILCLFWLYFFSFLRLGMKAPATLFTFLVLLLTILVCLAHTCFGCFKHLSPLNYKTEEPASDKGSEAEAHMPPPFTPYVPRILNGLASERTALSPQQQQQQTYGAIHNISGTIPGQCLAQSATGSVAAAPQEA.

At Met-1–Pro-51 the chain is on the extracellular side. Residue Asn-38 is glycosylated (N-linked (GlcNAc...) asparagine). Residues Thr-52–Arg-74 traverse the membrane as a helical segment. At Phe-75–Glu-134 the chain is on the cytoplasmic side. The helical transmembrane segment at Asp-135–Ser-167 threads the bilayer. The Extracellular portion of the chain corresponds to Gly-168–Asp-191. Residues Leu-192–Ser-217 traverse the membrane as a helical segment. Residues Ile-218–Leu-416 are Cytoplasmic-facing. Residues Lys-219 to Gln-414 form an intracellular linker IL2; confers mechanosensitivity region. A helical transmembrane segment spans residues Arg-417–Ser-444. Residues Thr-445–Ile-462 are Extracellular-facing. A glycan (N-linked (GlcNAc...) asparagine) is linked at Asn-450. A helical transmembrane segment spans residues Ile-463–Glu-490. The Cytoplasmic segment spans residues Ser-491–Lys-495. Residues Ser-496–Leu-532 traverse the membrane as a helical segment. The Extracellular portion of the chain corresponds to Phe-533–Ala-554. A helical membrane pass occupies residues Phe-555 to Ile-586. Residues Phe-555–Ile-586 are gating helix. The Cytoplasmic segment spans residues Met-587–Glu-606. The chain crosses the membrane as a helical span at residues Phe-607–Tyr-624. The Extracellular portion of the chain corresponds to Ser-625–Cys-628. A helical membrane pass occupies residues Pro-629–Tyr-651. Residues Phe-652–Lys-661 are Cytoplasmic-facing. Residues Gly-662 to Arg-689 form a helical membrane-spanning segment. Over Leu-690–Ala-694 the chain is Extracellular. The chain crosses the membrane as a helical span at residues Pro-695–Leu-709. Residues Val-710–Ala-807 are Cytoplasmic-facing. Ser-739 bears the Phosphoserine mark.

Belongs to the CSC1 (TC 1.A.17) family. As to quaternary structure, monomer. In terms of processing, N-Glycosylated.

It is found in the lysosome membrane. The protein resides in the early endosome membrane. Its subcellular location is the cell membrane. The enzyme catalyses Ca(2+)(in) = Ca(2+)(out). In terms of biological role, mechanosensitive cation channel with low conductance and high activation threshold. In contrast to TMEM63B, does not show phospholipid scramblase activity. Acts as a regulator of lysosomal morphology by mediating lysosomal mechanosensitivity. Important for the baby's first breath and respiration throughout life. Upon lung inflation conducts cation currents in alveolar type 1 and 2 cells triggering lamellar body exocytosis and surfactant secretion into airspace. Also acts as an osmosensitive cation channel preferentially activated by hypotonic stress. The chain is Mechanosensitive cation channel TMEM63A from Homo sapiens (Human).